Reading from the N-terminus, the 145-residue chain is NADH-quinone oxidoreductase subunit A (145 aa).

The next 3 helical transmembrane spans lie at 14 to 34 (FAVFLLSALGLCVFMLTGGFL), 66 to 86 (FYLVAMFFVIFDVETLYLYAW), and 96 to 116 (VGFIEATIFILILLAGLVYLV).

The protein belongs to the complex I subunit 3 family. In terms of assembly, NDH-1 is composed of 13 different subunits. Subunits NuoA, H, J, K, L, M, N constitute the membrane sector of the complex.

Its subcellular location is the cell inner membrane. It catalyses the reaction a quinone + NADH + 5 H(+)(in) = a quinol + NAD(+) + 4 H(+)(out). In terms of biological role, NDH-1 shuttles electrons from NADH, via FMN and iron-sulfur (Fe-S) centers, to quinones in the respiratory chain. The immediate electron acceptor for the enzyme in this species is believed to be ubiquinone. Couples the redox reaction to proton translocation (for every two electrons transferred, four hydrogen ions are translocated across the cytoplasmic membrane), and thus conserves the redox energy in a proton gradient. The chain is NADH-quinone oxidoreductase subunit A from Sodalis glossinidius (strain morsitans).